Here is a 183-residue protein sequence, read N- to C-terminus: Glutathione-regulated potassium-efflux system ancillary protein KefG (183 aa).

The protein belongs to the NAD(P)H dehydrogenase (quinone) family. KefG subfamily. Interacts with KefB.

Its subcellular location is the cell inner membrane. The catalysed reaction is a quinone + NADH + H(+) = a quinol + NAD(+). The enzyme catalyses a quinone + NADPH + H(+) = a quinol + NADP(+). Regulatory subunit of a potassium efflux system that confers protection against electrophiles. Required for full activity of KefB. In Salmonella paratyphi B (strain ATCC BAA-1250 / SPB7), this protein is Glutathione-regulated potassium-efflux system ancillary protein KefG.